A 149-amino-acid polypeptide reads, in one-letter code: Cytochrome c-type biogenesis protein CcmE (149 aa).

Topologically, residues 1-8 are cytoplasmic; it reads MNPKRKQR. A helical; Signal-anchor for type II membrane protein membrane pass occupies residues 9-29; sequence LIIVSFLVIGVSATVGLIMAA. Residues 30-149 are Periplasmic-facing; that stretch reads LSSNVNHFYN…AQDAAPAQTY (120 aa). The heme site is built by histidine 124 and tyrosine 128.

This sequence belongs to the CcmE/CycJ family.

It is found in the cell inner membrane. Its function is as follows. Heme chaperone required for the biogenesis of c-type cytochromes. Transiently binds heme delivered by CcmC and transfers the heme to apo-cytochromes in a process facilitated by CcmF and CcmH. This chain is Cytochrome c-type biogenesis protein CcmE, found in Hahella chejuensis (strain KCTC 2396).